A 403-amino-acid chain; its full sequence is CCA-adding enzyme (403 aa).

G32 and R35 together coordinate ATP. Residues G32 and R35 each contribute to the CTP site. Mg(2+) contacts are provided by D45 and D47. 5 residues coordinate ATP: R116, D159, R162, R165, and R168. CTP is bound by residues R116, D159, R162, R165, and R168.

Belongs to the tRNA nucleotidyltransferase/poly(A) polymerase family. Bacterial CCA-adding enzyme type 3 subfamily. As to quaternary structure, homodimer. Mg(2+) is required as a cofactor.

It carries out the reaction a tRNA precursor + 2 CTP + ATP = a tRNA with a 3' CCA end + 3 diphosphate. The enzyme catalyses a tRNA with a 3' CCA end + 2 CTP + ATP = a tRNA with a 3' CCACCA end + 3 diphosphate. In terms of biological role, catalyzes the addition and repair of the essential 3'-terminal CCA sequence in tRNAs without using a nucleic acid template. Adds these three nucleotides in the order of C, C, and A to the tRNA nucleotide-73, using CTP and ATP as substrates and producing inorganic pyrophosphate. tRNA 3'-terminal CCA addition is required both for tRNA processing and repair. Also involved in tRNA surveillance by mediating tandem CCA addition to generate a CCACCA at the 3' terminus of unstable tRNAs. While stable tRNAs receive only 3'-terminal CCA, unstable tRNAs are marked with CCACCA and rapidly degraded. This chain is CCA-adding enzyme, found in Streptococcus suis (strain 98HAH33).